We begin with the raw amino-acid sequence, 372 residues long: Protein Wnt-1 (372 aa).

The first 29 residues, 1–29 (MLKSTQVILIFILLISIVESLSWLALGLA), serve as a signal peptide directing secretion. Disulfide bonds link Cys77–Cys88, Cys130–Cys138, and Cys140–Cys158. The N-linked (GlcNAc...) asparagine glycan is linked to Asn87. Asn187 carries an N-linked (GlcNAc...) asparagine glycan. Cystine bridges form between Cys225/Cys239, Cys227/Cys234, Cys301/Cys332, Cys317/Cys327, Cys331/Cys371, Cys347/Cys362, Cys349/Cys359, and Cys354/Cys355. Residue Ser231 is the site of O-palmitoleoyl serine; by mom-1 attachment.

The protein belongs to the Wnt family. Post-translationally, palmitoleoylation is required for efficient binding to frizzled receptors. Depalmitoleoylation leads to Wnt signaling pathway inhibition. In terms of tissue distribution, expressed in intestine, some head neurons and ventral nerve cord and pharyngeal neurons. Expressed in the tail and weakly expressed in the vulva and body wall muscles. Expressed highly in posterior dorsal and ventral muscle cells.

The protein resides in the secreted. Its subcellular location is the extracellular space. The protein localises to the extracellular matrix. It localises to the cytoplasm. It is found in the cell membrane. In terms of biological role, ligand for members of the frizzled family of seven transmembrane receptors. Probable developmental protein. May be a signaling molecule which affects the development of discrete regions of tissues. Is likely to signal over only few cell diameters. Binds receptor tyrosine kinase cam-1. Together with Wnt ligand cwn-2, regulates the migration of CAN, ALM, BDU and HSN neurons during embryogenesis, the migration of QL and QR neuroblast descendants during larval development, and polarity of ALM neurons. Also acts with the Wnt ligand egl-20 to direct HSN neuron migration. Acts through the Wnt receptor cfz-2 to direct ALM migration. Also plays a role in axon growth and guidance in HSN and male CP neurons. In addition, together with Wnt ligand cwn-2, negatively regulates developmental neurite pruning of AIM neurons probably by acting as a ligand for receptor tyrosine kinase cam-1. Probably by activating the Wnt/Frizzled pathway, may regulate vulva development. May act redundantly with other Wnt ligands such as cwn-2 and mom-2 to control seam cell polarity. In Caenorhabditis elegans, this protein is Protein Wnt-1 (cwn-1).